We begin with the raw amino-acid sequence, 436 residues long: Trigger factor (436 aa).

The 86-residue stretch at 161–246 folds into the PPIase FKBP-type domain; sequence DDQLNIDFVG…VNSVAEPKLP (86 aa).

Belongs to the FKBP-type PPIase family. Tig subfamily.

The protein resides in the cytoplasm. It catalyses the reaction [protein]-peptidylproline (omega=180) = [protein]-peptidylproline (omega=0). Involved in protein export. Acts as a chaperone by maintaining the newly synthesized protein in an open conformation. Functions as a peptidyl-prolyl cis-trans isomerase. The sequence is that of Trigger factor from Pseudomonas paraeruginosa (strain DSM 24068 / PA7) (Pseudomonas aeruginosa (strain PA7)).